Reading from the N-terminus, the 151-residue chain is Large ribosomal subunit protein uL13 (151 aa).

This sequence belongs to the universal ribosomal protein uL13 family. As to quaternary structure, part of the 50S ribosomal subunit.

Its function is as follows. This protein is one of the early assembly proteins of the 50S ribosomal subunit, although it is not seen to bind rRNA by itself. It is important during the early stages of 50S assembly. This is Large ribosomal subunit protein uL13 from Acaryochloris marina (strain MBIC 11017).